Reading from the N-terminus, the 477-residue chain is PTS system glucose-specific EIICB component (477 aa).

The Cytoplasmic portion of the chain corresponds to 1–14 (MFKNAFANLQKVGK). Positions 1-388 (MFKNAFANLQ…LDLKTPGRED (388 aa)) constitute a PTS EIIC type-1 domain. Residues 15 to 35 (SLMLPVSVLPIAGILLGVGSA) form a helical membrane-spanning segment. Residues 36–50 (NFSWLPAVVSHVMAE) are Periplasmic-facing. A helical transmembrane segment spans residues 51-71 (AGGSVFANMPLIFAIGVALGF). Residues 72-79 (TNNDGVSA) are Cytoplasmic-facing. Residues 80 to 100 (LAAVVAYGIMVKTMAVVAPLV) form a helical membrane-spanning segment. The Periplasmic portion of the chain corresponds to 101 to 111 (LHLPAEEIASK). A helical membrane pass occupies residues 112 to 132 (HLADTGVLGGIISGAIAAYMF). Residues 133 to 151 (NRFYRIKLPEYLGFFAGKR) lie on the Cytoplasmic side of the membrane. A helical membrane pass occupies residues 152-172 (FVPIISGLAAIFTGVVLSFIW). The Periplasmic segment spans residues 173-190 (PPIGSAIQTFSQWAAYQN). The chain crosses the membrane as a helical span at residues 191-211 (PVVAFGIYGFIERCLVPFGLH). At 212–249 (HIWNVPFQMQIGEYTNAAGQVFHGDIPRYMAGDPTAGK) the chain is on the cytoplasmic side. Residues 250-270 (LSGGFLFKMYGLPAAAIAIWH) form a helical membrane-spanning segment. Topologically, residues 271–279 (SAKPENRAK) are periplasmic. Residues 280–300 (VGGIMISAALTSFLTGITEPI) form a helical membrane-spanning segment. Residues 301–309 (EFSFMFVAP) lie on the Cytoplasmic side of the membrane. The chain crosses the membrane as a helical span at residues 310–330 (ILYIIHAILAGLAFPICILLG). Topologically, residues 331 to 355 (MRDGTSFSHGLIDFIVLSGNSSKLW) are periplasmic. A helical transmembrane segment spans residues 356 to 376 (LFPIVGIGYAIVYYTIFRVLI). Residues 377–477 (KALDLKTPGR…TEMDEYIRNH (101 aa)) lie on the Cytoplasmic side of the membrane. A PTS EIIB type-1 domain is found at 399 to 477 (SEMAPALVAA…TEMDEYIRNH (79 aa)). Catalysis depends on cysteine 421, which acts as the Phosphocysteinsyse intermediate; for EIIB activity. Cysteine 421 carries the phosphocysteine modification.

It is found in the cell inner membrane. It catalyses the reaction N(pros)-phospho-L-histidyl-[protein] + D-glucose(out) = D-glucose 6-phosphate(in) + L-histidyl-[protein]. Its function is as follows. The phosphoenolpyruvate-dependent sugar phosphotransferase system (sugar PTS), a major carbohydrate active transport system, catalyzes the phosphorylation of incoming sugar substrates concomitantly with their translocation across the cell membrane. The enzyme II complex composed of PtsG and Crr is involved in glucose transport. Also functions as a chemoreceptor monitoring the environment for changes in sugar concentration. This chain is PTS system glucose-specific EIICB component (ptsG), found in Escherichia coli O6:H1 (strain CFT073 / ATCC 700928 / UPEC).